A 550-amino-acid polypeptide reads, in one-letter code: Chaperonin GroEL (550 aa).

ATP-binding positions include 30-33 (TLGP), K51, 87-91 (DGTTT), G415, and D496. The tract at residues 528 to 550 (EGGDMPAMPPGGMGGMGGMGGMM) is disordered. Over residues 538–550 (GGMGGMGGMGGMM) the composition is skewed to gly residues.

It belongs to the chaperonin (HSP60) family. Forms a cylinder of 14 subunits composed of two heptameric rings stacked back-to-back. Interacts with the co-chaperonin GroES.

The protein resides in the cytoplasm. It carries out the reaction ATP + H2O + a folded polypeptide = ADP + phosphate + an unfolded polypeptide.. In terms of biological role, together with its co-chaperonin GroES, plays an essential role in assisting protein folding. The GroEL-GroES system forms a nano-cage that allows encapsulation of the non-native substrate proteins and provides a physical environment optimized to promote and accelerate protein folding. This Chlorobium phaeobacteroides (strain BS1) protein is Chaperonin GroEL.